The following is a 145-amino-acid chain: MIIDITEIMDWIPHRYPFLLVDRVLKIDPNKSITGIKNVTVNEPQFTGHFPARPVMPGVLMVEAMAQLAAILVAKSLGSTKNKEVFLMTIENAKFRRIVQPGDTMHIHAVIDQQRANVWKFSSTVTVEGEIAAESKFTAMIKDKT.

His49 is an active-site residue.

This sequence belongs to the thioester dehydratase family. FabZ subfamily.

It localises to the cytoplasm. The catalysed reaction is a (3R)-hydroxyacyl-[ACP] = a (2E)-enoyl-[ACP] + H2O. Its function is as follows. Involved in unsaturated fatty acids biosynthesis. Catalyzes the dehydration of short chain beta-hydroxyacyl-ACPs and long chain saturated and unsaturated beta-hydroxyacyl-ACPs. In Rickettsia peacockii (strain Rustic), this protein is 3-hydroxyacyl-[acyl-carrier-protein] dehydratase FabZ.